A 308-amino-acid polypeptide reads, in one-letter code: Porphobilinogen deaminase (308 aa).

S-(dipyrrolylmethanemethyl)cysteine is present on Cys243.

Belongs to the HMBS family. Monomer. The cofactor is dipyrromethane.

It catalyses the reaction 4 porphobilinogen + H2O = hydroxymethylbilane + 4 NH4(+). It functions in the pathway porphyrin-containing compound metabolism; protoporphyrin-IX biosynthesis; coproporphyrinogen-III from 5-aminolevulinate: step 2/4. In terms of biological role, tetrapolymerization of the monopyrrole PBG into the hydroxymethylbilane pre-uroporphyrinogen in several discrete steps. The protein is Porphobilinogen deaminase of Mesorhizobium japonicum (strain LMG 29417 / CECT 9101 / MAFF 303099) (Mesorhizobium loti (strain MAFF 303099)).